The chain runs to 250 residues: Small ribosomal subunit protein uS2 (250 aa).

The protein belongs to the universal ribosomal protein uS2 family.

The protein is Small ribosomal subunit protein uS2 of Polaromonas naphthalenivorans (strain CJ2).